The chain runs to 175 residues: Major MR/P fimbria protein (175 aa).

The signal sequence occupies residues 1-23 (MKLNKLALVLGLGLSVVAGSALA). Cys-42 and Cys-81 are disulfide-bonded.

It belongs to the fimbrial protein family.

It is found in the fimbrium. Functionally, major structural component of mannose-resistant/proteus-like fimbriae of P.mirabilis. This is Major MR/P fimbria protein (mrpA) from Proteus mirabilis (strain HI4320).